Consider the following 377-residue polypeptide: 4-hydroxy-tetrahydrodipicolinate synthase 2, chloroplastic (377 aa).

Residues 1-51 (MMAAQPTANPGVRLGWKAPGALASPPRLALSRSAAAPLASHRVGRGKFSAA) constitute a chloroplast transit peptide. Threonine 120 is a pyruvate binding site. Catalysis depends on tyrosine 206, which acts as the Proton donor/acceptor. The active-site Schiff-base intermediate with substrate is the lysine 234. Pyruvate is bound at residue isoleucine 273.

Belongs to the DapA family. As to quaternary structure, tetramer of modified subunits derived from two genes in different combinations.

Its subcellular location is the plastid. The protein resides in the chloroplast. The enzyme catalyses L-aspartate 4-semialdehyde + pyruvate = (2S,4S)-4-hydroxy-2,3,4,5-tetrahydrodipicolinate + H2O + H(+). It participates in amino-acid biosynthesis; L-lysine biosynthesis via DAP pathway; (S)-tetrahydrodipicolinate from L-aspartate: step 3/4. Sensitive to lysine inhibition. This inhibition increase in an allosteric manner with increasing concentration of the inhibitor. Functionally, catalyzes the condensation of (S)-aspartate-beta-semialdehyde [(S)-ASA] and pyruvate to 4-hydroxy-tetrahydrodipicolinate (HTPA). The chain is 4-hydroxy-tetrahydrodipicolinate synthase 2, chloroplastic from Triticum aestivum (Wheat).